The primary structure comprises 466 residues: Putative transcription factor bHLH041 (466 aa).

Disordered stretches follow at residues 108–129 (PANSDYLRPPHYPSSSSSSLSP), 194–213 (LTGPSSPPSTSSSPQRKGRA), and 260–289 (RENATTHGEGSGGSGGGGRYTSGPSATQLQ). The segment covering 120 to 129 (PSSSSSSLSP) has biased composition (low complexity). Positions 268–279 (EGSGGSGGGGRY) are enriched in gly residues. A bHLH domain is found at 285 to 334 (ATQLQHMISERKRREKLNESFQALRSLLPPGTKKDKASVLSIAREQLSSL).

In terms of assembly, homodimer.

Its subcellular location is the nucleus. The chain is Putative transcription factor bHLH041 (BHLH41) from Arabidopsis thaliana (Mouse-ear cress).